We begin with the raw amino-acid sequence, 609 residues long: ATP-dependent lipid A-core flippase (609 aa).

A run of 6 helical transmembrane segments spans residues 47-67 (LLAA…IYLI), 88-108 (ILML…VGSF), 167-187 (AIIT…VMFV), 190-210 (WQLS…ISII), 279-299 (VIQI…AIFG), and 305-325 (GSSW…AAIL). In terms of domain architecture, ABC transmembrane type-1 spans 47 to 340 (LLAAIGSIFF…LTKVNVVIQK (294 aa)). In terms of domain architecture, ABC transporter spans 372-606 (VTIKDLSFAF…GGLYTRLYQS (235 aa)). ATP is bound at residue 404 to 411 (GKSGSGKT).

It belongs to the ABC transporter superfamily. Lipid exporter (TC 3.A.1.106) family. In terms of assembly, homodimer.

The protein resides in the cell inner membrane. The catalysed reaction is ATP + H2O + lipid A-core oligosaccharideSide 1 = ADP + phosphate + lipid A-core oligosaccharideSide 2.. Involved in lipopolysaccharide (LPS) biosynthesis. Translocates lipid A-core from the inner to the outer leaflet of the inner membrane. Transmembrane domains (TMD) form a pore in the inner membrane and the ATP-binding domain (NBD) is responsible for energy generation. The protein is ATP-dependent lipid A-core flippase of Francisella tularensis subsp. holarctica (strain LVS).